The sequence spans 361 residues: mRNA export factor ICP27 homolog (361 aa).

The span at 1 to 15 (MEDSGNSSGSEASRS) shows a compositional bias: low complexity. Residues 1-107 (MEDSGNSSGS…SESARAAVSA (107 aa)) are disordered. The span at 16-36 (GSEERRPVRERLGSRPPERRP) shows a compositional bias: basic and acidic residues. The RGG-box stretch occupies residues 45 to 54 (RRRRGGRGGR). Residues 80–99 (RQEADRPDGGPDAPPDRLSE) show a composition bias toward basic and acidic residues. Zn(2+) is bound by residues C253, H328, C332, and C337. The CHC2-type zinc finger occupies 253 to 337 (CYLRDTPVDE…HKTGCDAPTC (85 aa)).

Belongs to the HHV-1 ICP27 protein family. In terms of assembly, homodimer. Homodimerization is required for transactivation. Associates in a complex with RNA, and host export factors NXF1/TAP and ALYREF; these interactions allow nuclear export of viral transcripts. Interacts with three host shuttling SR proteins SRSF1, SRSF3 and SRSF7. Interacts with host SRPK1. Interacts with IE62; this interaction enhances IE62 transactivation.

Its subcellular location is the host cytoplasm. It is found in the host nucleus. In terms of biological role, multifunctional regulator of the expression of viral genes that mediates nuclear export of viral intronless mRNAs. This immediate early (EI) protein promotes the nuclear export of viral intronless mRNAs by interacting with mRNAs and host NXF1/TAP. In Suid herpesvirus 1 (strain Kaplan) (SuHV-1), this protein is mRNA export factor ICP27 homolog.